A 212-amino-acid chain; its full sequence is Pyridoxine/pyridoxamine 5'-phosphate oxidase (212 aa).

FMN contacts are provided by residues 59–64 (RMVLMK), 74–75 (YS), K81, and Q103. Residue K64 participates in substrate binding. Substrate is bound by residues Y121 and R125. FMN contacts are provided by residues 138–139 (QS) and W183. Residue 189 to 191 (RLH) coordinates substrate. FMN is bound at residue R193.

This sequence belongs to the pyridoxamine 5'-phosphate oxidase family. Homodimer. FMN serves as cofactor.

The enzyme catalyses pyridoxamine 5'-phosphate + O2 + H2O = pyridoxal 5'-phosphate + H2O2 + NH4(+). It catalyses the reaction pyridoxine 5'-phosphate + O2 = pyridoxal 5'-phosphate + H2O2. The protein operates within cofactor metabolism; pyridoxal 5'-phosphate salvage; pyridoxal 5'-phosphate from pyridoxamine 5'-phosphate: step 1/1. It participates in cofactor metabolism; pyridoxal 5'-phosphate salvage; pyridoxal 5'-phosphate from pyridoxine 5'-phosphate: step 1/1. In terms of biological role, catalyzes the oxidation of either pyridoxine 5'-phosphate (PNP) or pyridoxamine 5'-phosphate (PMP) into pyridoxal 5'-phosphate (PLP). This is Pyridoxine/pyridoxamine 5'-phosphate oxidase from Rhodopseudomonas palustris (strain HaA2).